We begin with the raw amino-acid sequence, 504 residues long: L-arabinose isomerase (504 aa).

Glu308, Glu335, His352, and His452 together coordinate Mn(2+).

This sequence belongs to the arabinose isomerase family. Mn(2+) is required as a cofactor.

The catalysed reaction is beta-L-arabinopyranose = L-ribulose. The protein operates within carbohydrate degradation; L-arabinose degradation via L-ribulose; D-xylulose 5-phosphate from L-arabinose (bacterial route): step 1/3. Catalyzes the conversion of L-arabinose to L-ribulose. The chain is L-arabinose isomerase from Bifidobacterium adolescentis (strain ATCC 15703 / DSM 20083 / NCTC 11814 / E194a).